The sequence spans 665 residues: RNA-directed RNA polymerase (665 aa).

Residues 310–485 (NKEEKVKEWS…LKEGKVNPSP (176 aa)) form the RdRp catalytic domain. 3 residues coordinate Mg(2+): Asp454, Tyr491, and Gly495.

As to quaternary structure, part of the packaging complex composed of RDRP, P4 and P7. Interacts with P7. The cofactor is Mg(2+). It depends on Mn(2+) as a cofactor.

It localises to the virion. It catalyses the reaction RNA(n) + a ribonucleoside 5'-triphosphate = RNA(n+1) + diphosphate. In terms of biological role, rna-dependent RNA polymerase part of the packaging complex that packages the viral RNA segments, replicate them into a double-stranded form and transcribe them. In Pseudomonas phage phi6 (Bacteriophage phi-6), this protein is RNA-directed RNA polymerase (P2).